Reading from the N-terminus, the 267-residue chain is Zinc finger protein ZAT1 (267 aa).

The C2H2-type 1 zinc-finger motif lies at 5-27 (HKCKLCWKSFANGRALGGHMRSH). Disordered stretches follow at residues 34 to 99 (PSQP…ADIK) and 181 to 204 (SHKKKIAETDQLGSDELKKKKKKS). Residues 52 to 62 (QDRESETESSK) are compositionally biased toward basic and acidic residues. The segment covering 63 to 73 (KPSRKRSRLNR) has biased composition (basic residues). The span at 83–97 (QSNEEGKSETARAAD) shows a compositional bias: basic and acidic residues. 2 consecutive C2H2-type zinc fingers follow at residues 160–182 (FECETCEKVFKSYQALGGHRASH) and 209–231 (HECPICAKVFTSGQALGGHKRSH).

It is found in the nucleus. Its function is as follows. Probable transcription factor that may be involved in stress responses. This chain is Zinc finger protein ZAT1 (ZAT1), found in Arabidopsis thaliana (Mouse-ear cress).